The chain runs to 647 residues: DEAD-box ATP-dependent RNA helicase 18 (647 aa).

The Q motif signature appears at 23 to 51 (FSELSPALSPEVVKALKGGGFRRCTPVQA). A Helicase ATP-binding domain is found at 54–232 (IPLLLSHKDV…KAGLRNPVRV (179 aa)). Residue 67 to 74 (AATGSGKT) coordinates ATP. The DEAD box motif lies at 180-183 (DEAD). The Helicase C-terminal domain maps to 274–430 (QLVDFLVQNN…DIVPQIRSAA (157 aa)). Positions 507–582 (KYKDKAREKQ…RLLKKLKRGV (76 aa)) form a coiled coil. Over residues 512–545 (AREKQRQKTLKRKAEELALRPEIEKRRKAPEKPE) the composition is skewed to basic and acidic residues. 2 disordered regions span residues 512–565 (AREK…KEDM) and 590–647 (KLTG…TRRR). Positions 596-610 (ESDDDDSSDGGDSDL) are enriched in acidic residues. Basic residues predominate over residues 619–633 (KVLKKIKQKGKAKGS).

This sequence belongs to the DEAD box helicase family. DDX55/SPB4 subfamily. As to quaternary structure, interacts with BRI1. Phosphorylated.

It carries out the reaction ATP + H2O = ADP + phosphate + H(+). This is DEAD-box ATP-dependent RNA helicase 18 from Oryza sativa subsp. japonica (Rice).